The chain runs to 38 residues: DVNELNDVEERRAVVPQVWEIDIMITKHNDEIIQIEER.

As to quaternary structure, homodimer. In terms of processing, O-glycosylated. Contains sialic acid residues. As to expression, found in the whey fraction of milk (at protein level).

It is found in the secreted. This is Very early lactation protein from Trichosurus vulpecula (Brush-tailed possum).